Consider the following 100-residue polypeptide: HssA/B-like protein 37 (100 aa).

Disordered stretches follow at residues 1–29 (MTLF…SGTS) and 67–100 (RSRG…CCGI). Residues 71–93 (SCGGNRGNGNGNGGMGGGNGSCC) show a composition bias toward gly residues.

It belongs to the hssA/B family.

This chain is HssA/B-like protein 37 (hssl37), found in Dictyostelium discoideum (Social amoeba).